The following is an 85-amino-acid chain: Phosphocarrier protein HPr (85 aa).

The region spanning Met-1–Glu-85 is the HPr domain. The active-site Pros-phosphohistidine intermediate is His-15.

This sequence belongs to the HPr family.

It localises to the cytoplasm. Functionally, general (non sugar-specific) component of the phosphoenolpyruvate-dependent sugar phosphotransferase system (sugar PTS). This major carbohydrate active-transport system catalyzes the phosphorylation of incoming sugar substrates concomitantly with their translocation across the cell membrane. The phosphoryl group from phosphoenolpyruvate (PEP) is transferred to the phosphoryl carrier protein HPr by enzyme I. Phospho-HPr then transfers it to the PTS EIIA domain. The protein is Phosphocarrier protein HPr (ptsH) of Escherichia coli O157:H7.